The following is a 63-amino-acid chain: Putative alpha-neurotoxin RjAa9 (63 aa).

Residues 1–60 (KEGYPVDWGNCKYECMSDEYCKDLCADRKATSGYCYKLNWSCYCKGLPDDSPIKTPGKCR) enclose the LCN-type CS-alpha/beta domain. Cystine bridges form between cysteine 11–cysteine 59, cysteine 15–cysteine 35, cysteine 21–cysteine 42, and cysteine 25–cysteine 44.

This sequence belongs to the long (4 C-C) scorpion toxin superfamily. Sodium channel inhibitor family. Alpha subfamily. As to expression, expressed by the venom gland.

The protein localises to the secreted. Its function is as follows. Alpha toxins bind voltage-independently at site-3 of sodium channels (Nav) and inhibits the inactivation of the activated channels, thereby blocking neuronal transmission. The chain is Putative alpha-neurotoxin RjAa9 from Rhopalurus junceus (Caribbean blue scorpion).